The sequence spans 564 residues: Kelch repeat and BTB domain-containing protein 1 (564 aa).

The BTB domain occupies 21-88 (CDINIVINDE…IYGIPLSLTN (68 aa)). Positions 123 to 219 (CIDFYIYADK…SLLSPQVIKS (97 aa)) constitute a BACK domain. Kelch repeat units follow at residues 252 to 297 (IELI…VLDN), 298 to 346 (IIYM…ADDE), 347 to 395 (YIYC…MLNG), 397 to 441 (IYVI…VHDG), and 442 to 492 (KIYI…STHN).

Interacts (via BTB domain) with host CUL3.

The protein resides in the host cytoplasm. Functionally, probable substrate-specific adapter of CUL3-containing E3 ubiquitin-protein ligases which mediate the ubiquitination and subsequent proteasomal degradation of host target proteins. The protein is Kelch repeat and BTB domain-containing protein 1 (KBTB1) of Bos taurus (Bovine).